The primary structure comprises 158 residues: Encapsulin nanocompartment cargo protein EncB (158 aa).

Positions 22, 52, and 55 each coordinate Fe cation. 2 short sequence motifs (di-iron-binding motif) span residues 52–55 (EKEH) and 58–61 (EAVH). Residues 92 to 158 (ATVHVPTPDG…RGGGGSGSGR (67 aa)) form a disordered region. Residues 142–149 (LTVGSLRR) are probable targeting peptide. The span at 148–158 (RRGGGGSGSGR) shows a compositional bias: gly residues.

This sequence belongs to the ferritin-like superfamily.

Its subcellular location is the encapsulin nanocompartment. Cargo protein of a type 1 encapsulin nanocompartment. May help nucleate Fe atoms in the interior of the encapsulin nanocompartment. Present in about 36 copies/encapsulin nanocompartment. The sequence is that of Encapsulin nanocompartment cargo protein EncB from Myxococcus xanthus (strain DK1622).